We begin with the raw amino-acid sequence, 331 residues long: Protein C10 (331 aa).

It belongs to the poxviridae C4/C10 protein family.

The protein is Protein C10 of Vaccinia virus (strain Copenhagen) (VACV).